The sequence spans 23 residues: Phospholipase A2 homolog 4 (23 aa).

The protein belongs to the phospholipase A2 family. Group II subfamily. K49 sub-subfamily. In terms of assembly, homodimer; non-covalently linked (probable alternative/compact dimer conformation in solution). In terms of tissue distribution, expressed by the venom gland.

The protein resides in the secreted. In terms of biological role, snake venom phospholipase A2 homolog that lacks enzymatic activity. Induces acute muscle damage after intramuscular injection in mice and disrupts negatively charged liposomes but not positively charged ones. Also exerts a weak anticoagulant effect only at concentrations of 40 ug/ml or higher. A model of myotoxic mechanism has been proposed: an apo Lys49-PLA2 is activated by the entrance of a hydrophobic molecule (e.g. fatty acid) at the hydrophobic channel of the protein leading to a reorientation of a monomer. This reorientation causes a transition between 'inactive' to 'active' states, causing alignment of C-terminal and membrane-docking sites (MDoS) side-by-side and putting the membrane-disruption sites (MDiS) in the same plane, exposed to solvent and in a symmetric position for both monomers. The MDoS region stabilizes the toxin on membrane by the interaction of charged residues with phospholipid head groups. Subsequently, the MDiS region destabilizes the membrane with penetration of hydrophobic residues. This insertion causes a disorganization of the membrane, allowing an uncontrolled influx of ions (i.e. calcium and sodium), and eventually triggering irreversible intracellular alterations and cell death. In Bothrops asper (Terciopelo), this protein is Phospholipase A2 homolog 4.